The chain runs to 475 residues: Ribulose bisphosphate carboxylase large chain (475 aa).

The propeptide occupies 1–2 (MS). P3 carries the post-translational modification N-acetylproline. K14 is modified (N6,N6,N6-trimethyllysine). The substrate site is built by N123 and T173. The active-site Proton acceptor is K175. K177 is a substrate binding site. Residues K201, D203, and E204 each coordinate Mg(2+). K201 is modified (N6-carboxylysine). The Proton acceptor role is filled by H294. Substrate-binding residues include R295, H327, and S379.

It belongs to the RuBisCO large chain family. Type I subfamily. Heterohexadecamer of 8 large chains and 8 small chains; disulfide-linked. The disulfide link is formed within the large subunit homodimers. Mg(2+) is required as a cofactor. Post-translationally, the disulfide bond which can form in the large chain dimeric partners within the hexadecamer appears to be associated with oxidative stress and protein turnover.

The protein localises to the plastid. The protein resides in the chloroplast. It catalyses the reaction 2 (2R)-3-phosphoglycerate + 2 H(+) = D-ribulose 1,5-bisphosphate + CO2 + H2O. The enzyme catalyses D-ribulose 1,5-bisphosphate + O2 = 2-phosphoglycolate + (2R)-3-phosphoglycerate + 2 H(+). In terms of biological role, ruBisCO catalyzes two reactions: the carboxylation of D-ribulose 1,5-bisphosphate, the primary event in carbon dioxide fixation, as well as the oxidative fragmentation of the pentose substrate in the photorespiration process. Both reactions occur simultaneously and in competition at the same active site. This is Ribulose bisphosphate carboxylase large chain from Pinus longaeva (Great Basin bristlecone pine).